We begin with the raw amino-acid sequence, 193 residues long: Holliday junction branch migration complex subunit RuvA (193 aa).

The interval 1-63 is domain I; the sequence is MIAHIQGKLV…EDSHSLYGFA (63 aa). A domain II region spans residues 64–142; the sequence is EKSEKEIFKL…KLYDLDQVSI (79 aa). The tract at residues 143–145 is flexible linker; sequence SQS. The tract at residues 145 to 193 is domain III; it reads SNTNKDEALSALEVLGFIRKSAEKVVEKIVATMPDATVETIIKQALKNL.

The protein belongs to the RuvA family. As to quaternary structure, homotetramer. Forms an RuvA(8)-RuvB(12)-Holliday junction (HJ) complex. HJ DNA is sandwiched between 2 RuvA tetramers; dsDNA enters through RuvA and exits via RuvB. An RuvB hexamer assembles on each DNA strand where it exits the tetramer. Each RuvB hexamer is contacted by two RuvA subunits (via domain III) on 2 adjacent RuvB subunits; this complex drives branch migration. In the full resolvosome a probable DNA-RuvA(4)-RuvB(12)-RuvC(2) complex forms which resolves the HJ.

The protein localises to the cytoplasm. The RuvA-RuvB-RuvC complex processes Holliday junction (HJ) DNA during genetic recombination and DNA repair, while the RuvA-RuvB complex plays an important role in the rescue of blocked DNA replication forks via replication fork reversal (RFR). RuvA specifically binds to HJ cruciform DNA, conferring on it an open structure. The RuvB hexamer acts as an ATP-dependent pump, pulling dsDNA into and through the RuvAB complex. HJ branch migration allows RuvC to scan DNA until it finds its consensus sequence, where it cleaves and resolves the cruciform DNA. This chain is Holliday junction branch migration complex subunit RuvA, found in Flavobacterium psychrophilum (strain ATCC 49511 / DSM 21280 / CIP 103535 / JIP02/86).